The following is a 285-amino-acid chain: Energy-coupling factor transporter ATP-binding protein EcfA2 (285 aa).

The ABC transporter domain occupies 6–242 (LKVEELNYNY…KEVIRKVNLR (237 aa)). Residue 39–46 (GGNGVGKS) coordinates ATP.

This sequence belongs to the ABC transporter superfamily. Energy-coupling factor EcfA family. Forms a stable energy-coupling factor (ECF) transporter complex composed of 2 membrane-embedded substrate-binding proteins (S component), 2 ATP-binding proteins (A component) and 2 transmembrane proteins (T component).

The protein resides in the cell membrane. In terms of biological role, ATP-binding (A) component of a common energy-coupling factor (ECF) ABC-transporter complex. Unlike classic ABC transporters this ECF transporter provides the energy necessary to transport a number of different substrates. The sequence is that of Energy-coupling factor transporter ATP-binding protein EcfA2 from Clostridium perfringens (strain SM101 / Type A).